The sequence spans 444 residues: Tubulin beta-9 chain (444 aa).

GTP-binding residues include Gln-11, Glu-69, Ser-138, Gly-142, Thr-143, Gly-144, Asn-204, and Asn-226. Glu-69 lines the Mg(2+) pocket.

This sequence belongs to the tubulin family. As to quaternary structure, dimer of alpha and beta chains. A typical microtubule is a hollow water-filled tube with an outer diameter of 25 nm and an inner diameter of 15 nM. Alpha-beta heterodimers associate head-to-tail to form protofilaments running lengthwise along the microtubule wall with the beta-tubulin subunit facing the microtubule plus end conferring a structural polarity. Microtubules usually have 13 protofilaments but different protofilament numbers can be found in some organisms and specialized cells. Interacts with TFCA. Requires Mg(2+) as cofactor.

Its subcellular location is the cytoplasm. The protein resides in the cytoskeleton. In terms of biological role, tubulin is the major constituent of microtubules, a cylinder consisting of laterally associated linear protofilaments composed of alpha- and beta-tubulin heterodimers. Microtubules grow by the addition of GTP-tubulin dimers to the microtubule end, where a stabilizing cap forms. Below the cap, tubulin dimers are in GDP-bound state, owing to GTPase activity of alpha-tubulin. This Arabidopsis thaliana (Mouse-ear cress) protein is Tubulin beta-9 chain (TUBB9).